A 221-amino-acid chain; its full sequence is Protein GrpE (221 aa).

The segment at 1–83 is disordered; that stretch reads MEQEQKATQE…AKNCRTRSED (83 aa). Residues 23–32 are compositionally biased toward basic and acidic residues; that stretch reads QEEKAEERGG. Low complexity predominate over residues 41 to 53; it reads ENLQQENTQAQQE.

The protein belongs to the GrpE family. As to quaternary structure, homodimer.

The protein localises to the cytoplasm. Its function is as follows. Participates actively in the response to hyperosmotic and heat shock by preventing the aggregation of stress-denatured proteins, in association with DnaK and GrpE. It is the nucleotide exchange factor for DnaK and may function as a thermosensor. Unfolded proteins bind initially to DnaJ; upon interaction with the DnaJ-bound protein, DnaK hydrolyzes its bound ATP, resulting in the formation of a stable complex. GrpE releases ADP from DnaK; ATP binding to DnaK triggers the release of the substrate protein, thus completing the reaction cycle. Several rounds of ATP-dependent interactions between DnaJ, DnaK and GrpE are required for fully efficient folding. The sequence is that of Protein GrpE from Geobacillus stearothermophilus (Bacillus stearothermophilus).